A 1219-amino-acid chain; its full sequence is FYVE, RhoGEF and PH domain-containing protein 5 (1219 aa).

4 disordered regions span residues 1–85 (MGSP…SCQI), 94–113 (EEDF…PTES), 201–227 (SDTQ…GQVP), and 310–367 (GRES…PSSV). Over residues 23–50 (EVFEEDSADAAEGEDQIEQEEPPNCDEE) the composition is skewed to acidic residues. The span at 201–214 (SDTQAASGTLSGYS) shows a compositional bias: polar residues. The segment covering 319 to 337 (REPEGAGLDSHRVRRKEDN) has biased composition (basic and acidic residues). The span at 346 to 356 (SSGSFSQRSHL) shows a compositional bias: polar residues. The span at 357–367 (PSSGTSTPSSV) shows a compositional bias: low complexity. Thr555 bears the Phosphothreonine mark. The span at 586–599 (ESKQQSSEQEAESA) shows a compositional bias: low complexity. The segment at 586–644 (ESKQQSSEQEAESAYTEPYKVCPISAAPREDLTSDEEQGSSEEEDSASRDPSLSHKGEG) is disordered. A compositionally biased stretch (acidic residues) spans 618-630 (TSDEEQGSSEEED). Positions 631-644 (SASRDPSLSHKGEG) are enriched in basic and acidic residues. Positions 647 to 840 (RALVIAQELL…SKVTDRANES (194 aa)) constitute a DH domain. Residues 869–963 (EFLKEGTLMR…WHYCLSRALP (95 aa)) form the PH 1 domain. The segment at 998–1057 (VTHAMMCMNCGCDFSLTVRRHHCHACGKIVCRNCSRNKYPLKCLKNRMAKVCDGCFRELK) adopts an FYVE-type zinc-finger fold. 8 residues coordinate Zn(2+): Cys1004, Cys1007, Cys1020, Cys1023, Cys1028, Cys1031, Cys1049, and Cys1052. Residues 1120 to 1218 (GSAISGYLSR…WMEAMEDASV (99 aa)) enclose the PH 2 domain.

Expressed in highly vascularized tissues, such as lung, kidney and ovary.

It is found in the cytoplasm. The protein resides in the cytoskeleton. It localises to the cell projection. Its subcellular location is the ruffle membrane. The protein localises to the endoplasmic reticulum. It is found in the golgi apparatus. The protein resides in the early endosome. Its function is as follows. Activates CDC42, a member of the Ras-like family of Rho- and Rac proteins, by exchanging bound GDP for free GTP. Mediates VEGF-induced CDC42 activation. May regulate proangiogenic action of VEGF in vascular endothelial cells, including network formation, directional movement and proliferation. May play a role in regulating the actin cytoskeleton and cell shape. The protein is FYVE, RhoGEF and PH domain-containing protein 5 (Fgd5) of Mus musculus (Mouse).